The sequence spans 279 residues: Movement protein (279 aa).

The protein belongs to the cucumovirus movement protein family.

It is found in the host cell junction. The protein resides in the host plasmodesma. Functionally, transports viral genome to neighboring plant cells directly through plasmosdesmata, without any budding. The movement protein allows efficient cell to cell propagation, by bypassing the host cell wall barrier. Acts by forming a tubular structure at the host plasmodesmata, enlarging it enough to allow free passage of virion capsids. The chain is Movement protein from Cucumber mosaic virus (strain C7-2) (CMV).